An 85-amino-acid polypeptide reads, in one-letter code: MARLTLDGLRTILVACAGEDDGVDLSGDILDITFEELGYDSLALMESASRIERELGVALADGDINEELTPRVLLDLVNGAQAEAA.

A Carrier domain is found at 3-81 (RLTLDGLRTI…VLLDLVNGAQ (79 aa)). Serine 41 is subject to O-(pantetheine 4'-phosphoryl)serine.

In terms of processing, 4'-phosphopantetheine is transferred from CoA to a specific serine of the apo-ACP-like protein.

It participates in antibiotic biosynthesis; granaticin biosynthesis. Its function is as follows. Acyl carrier protein. The chain is Granaticin polyketide synthase acyl carrier protein from Streptomyces violaceoruber.